The sequence spans 306 residues: Grixazone synthase (306 aa).

Cu(2+) contacts are provided by H39, H58, H67, H222, H226, and H248.

Belongs to the tyrosinase family. It depends on Cu(2+) as a cofactor.

It carries out the reaction 2 3-amino-4-hydroxybenzoate + N-acetyl-L-cysteine + 2 O2 + H(+) = grixazone B + CO2 + 4 H2O. It catalyses the reaction 2 3-amino-4-hydroxybenzaldehyde + N-acetyl-L-cysteine + 2 O2 = grixazone A + formate + 3 H2O + H(+). The enzyme catalyses 4 2-aminophenol + 3 O2 = 2 2-aminophenoxazin-3-one + 6 H2O. Inhibited by 3-amino-4-hydroxybenzensulfonic acid, 4-hydroxy-3-nitrobenzaldehyde, L-tyrosine, p-hydroxybenzaldehyde. Activated by the copper chaperone GriE. In terms of biological role, involved in the biosynthesis of the parasiticide antibiotic grixazone. Catalyzes the oxidation of 3-amino-4-hydroxybenzoate (3,4-AHBOA) to yield the corresponding quinone imine which is then non-enzymatically conjugated with the thiol group of N-acetylcysteine. The resultant compound is oxidized to its quinone imine enzymatically and is then dimerized non-enzymatically with another quinone imine oxidized by GriF to yield grixazone B. 3-amino-4-hydroxybenzaldehyde (3,4-AHBAL) can also be used as substrate to yield grixazone A. In the grixazone biosynthetic pathway, it can also function as an o-aminophenol oxidase that catalyzes the formation of the phenoxazinone chromophore from alpha-aminophenol. It can also use 2-amino-4-methylphenol, and to a lesser extent, 3,4-dihydroxybenzaldehyde, catechol and 3,4-dihydroxy-L-phenylalanine (L-DOPA) as substrates. In contrast to tyrosinases, it does not display monophenolase activity. This Streptomyces griseus subsp. griseus (strain JCM 4626 / CBS 651.72 / NBRC 13350 / KCC S-0626 / ISP 5235) protein is Grixazone synthase.